The chain runs to 325 residues: Glycerol-3-phosphate dehydrogenase [NAD(P)+] (325 aa).

Tryptophan 11, arginine 30, and lysine 103 together coordinate NADPH. Residues lysine 103, glycine 131, and serine 133 each coordinate sn-glycerol 3-phosphate. Alanine 135 contributes to the NADPH binding site. Sn-glycerol 3-phosphate-binding residues include lysine 186, aspartate 242, serine 252, arginine 253, and asparagine 254. Catalysis depends on lysine 186, which acts as the Proton acceptor. Arginine 253 is a binding site for NADPH. NADPH-binding residues include valine 279 and glutamate 281.

The protein belongs to the NAD-dependent glycerol-3-phosphate dehydrogenase family.

Its subcellular location is the cytoplasm. It carries out the reaction sn-glycerol 3-phosphate + NAD(+) = dihydroxyacetone phosphate + NADH + H(+). It catalyses the reaction sn-glycerol 3-phosphate + NADP(+) = dihydroxyacetone phosphate + NADPH + H(+). Its pathway is membrane lipid metabolism; glycerophospholipid metabolism. Catalyzes the reduction of the glycolytic intermediate dihydroxyacetone phosphate (DHAP) to sn-glycerol 3-phosphate (G3P), the key precursor for phospholipid synthesis. The polypeptide is Glycerol-3-phosphate dehydrogenase [NAD(P)+] (Wolbachia pipientis subsp. Culex pipiens (strain wPip)).